Reading from the N-terminus, the 238-residue chain is MTVGIARKLSRDKAHRDALLKNLACQLFQHESIVSTHAKCKEASRVAERIITWTKRAITTSNSVAQAELKSQIQSQLFLAGDNRKLMKRLFSEIAPRYLERPGGYTRVLRLEPRANDSAPQSVLELVDSPVMSESHTVNRGNLKMWLLVKSVINDDANQLPHNPLTLQNLHKVAKFKAEAQLHGEIMLIKQVLLKEMSLPYDEALENERTQALLKEVYSSSLPKKTKKPSSYVMVPRP.

The protein belongs to the bacterial ribosomal protein bL17 family. Component of the mitochondrial large ribosomal subunit (mt-LSU). Mature yeast 74S mitochondrial ribosomes consist of a small (37S) and a large (54S) subunit. The 37S small subunit contains a 15S ribosomal RNA (15S mt-rRNA) and 34 different proteins. The 54S large subunit contains a 21S rRNA (21S mt-rRNA) and 46 different proteins.

The protein resides in the mitochondrion. In terms of biological role, component of the mitochondrial ribosome (mitoribosome), a dedicated translation machinery responsible for the synthesis of mitochondrial genome-encoded proteins, including at least some of the essential transmembrane subunits of the mitochondrial respiratory chain. The mitoribosomes are attached to the mitochondrial inner membrane and translation products are cotranslationally integrated into the membrane. The chain is Large ribosomal subunit protein bL17m (MRPL8) from Saccharomyces cerevisiae (strain ATCC 204508 / S288c) (Baker's yeast).